Here is a 370-residue protein sequence, read N- to C-terminus: Putative transposase InsL for insertion sequence element IS186A (370 aa).

The protein belongs to the transposase 11 family.

Involved in the transposition of the insertion sequence IS186. This is Putative transposase InsL for insertion sequence element IS186A (insL1) from Escherichia coli (strain K12).